Here is a 566-residue protein sequence, read N- to C-terminus: MALTCTDMSDAVAGSDAEGLTADAIVVGAGLAGLVAACELADRGLRVLILDQENRANVGGQAFWSFGGLFLVNSPEQRRLGIRDSHELALQDWLGTAAFDRPEDYWPEQWAHAYVDFAAGEKRSWLRARGLKIFPLVGWAERGGYDAQGHGNSVPRFHITWGTGPALVDIFVRQLRDRPTVRFAHRHQVDKLIVEGNAVTGVRGTVLEPSDEPRGAPSSRKSVGKFEFRASAVIVASGGIGGNHELVRKNWPRRMGRIPKQLLSGVPAHVDGRMIGIAQKAGAAVINPDRMWHYTEGITNYDPIWPRHGIRIIPGPSSLWLDAAGKRLPVPLFPGFDTLGTLEYITKSGHDYTWFVLNAKIIEKEFALSGQEQNPDLTGRRLGQLLRSRAHAGPPGPVQAFIDRGVDFVHANSLRELVAAMNELPDVVPLDYETVAAAVTARDREVVNKYSKDGQITAIRAARRYRGDRFGRVVAPHRLTDPKAGPLIAVKLHILTRKTLGGIETDLDARVLKADGTPLAGLYAAGEVAGFGGGGVHGYRALEGTFLGGCIFSGRAAGRGAAEDIR.

23–54 (DAIVVGAGLAGLVAACELADRGLRVLILDQEN) serves as a coordination point for FAD.

The protein belongs to the FAD-dependent oxidoreductase 2 family. FAD serves as cofactor.

Its pathway is lipid metabolism; steroid biosynthesis. Its function is as follows. Able to catalyze the elimination of the C-1 and C-2 hydrogen atoms of the A-ring from the polycyclic ring structure of 3-ketosteroids. The chain is KsdD-like steroid dehydrogenase MT0809 from Mycobacterium tuberculosis (strain CDC 1551 / Oshkosh).